Consider the following 2763-residue polypeptide: Large tegument protein deneddylase (2763 aa).

The interval 1–247 (MDIIPPIAVT…CDTYFTDEQY (247 aa)) is deubiquitination activity. Residues 12–237 (AGVGSRNQFD…SSAVTLIYGS (226 aa)) enclose the Peptidase C76 domain. Catalysis depends on residues cysteine 32, aspartate 168, and histidine 170. The tract at residues 495–523 (LELFINLTILRLTGFVVENGTRTHHGATS) is interaction with inner tegument protein. Positions 2456–2476 (VRPAQPAQPAQPAQPAQTVQP) are disordered. 5 repeat units span residues 2458–2460 (PAQ), 2461–2463 (PAQ), 2464–2466 (PAQ), 2467–2469 (PAQ), and 2470–2472 (PAQ). Residues 2458–2472 (PAQPAQPAQPAQPAQ) form a 5 X 3 AA repeats of P-A-Q region. Residues 2459 to 2476 (AQPAQPAQPAQPAQTVQP) show a composition bias toward low complexity.

This sequence belongs to the herpesviridae large tegument protein family. Interacts with host CUL1 and CUL4A; these interactions inhibit the E3 ligase activity of cullins. Interacts with inner tegument protein. Interacts with capsid vertex specific component CVC2. Interacts with the major capsid protein/MCP.

Its subcellular location is the virion tegument. It localises to the host cytoplasm. The protein localises to the host nucleus. It catalyses the reaction Thiol-dependent hydrolysis of ester, thioester, amide, peptide and isopeptide bonds formed by the C-terminal Gly of ubiquitin (a 76-residue protein attached to proteins as an intracellular targeting signal).. Functionally, large tegument protein that plays multiple roles in the viral cycle. During viral entry, remains associated with the capsid while most of the tegument is detached and participates in the capsid transport toward the host nucleus. Plays a role in the routing of the capsid at the nuclear pore complex and subsequent uncoating. Within the host nucleus, acts as a deneddylase and promotes the degradation of nuclear CRLs (cullin-RING ubiquitin ligases) and thereby stabilizes nuclear CRL substrates, while cytoplasmic CRLs remain unaffected. These modifications prevent host cell cycle S-phase progression and create a favorable environment allowing efficient viral genome replication. Participates later in the secondary envelopment of capsids. Indeed, plays a linker role for the association of the outer viral tegument to the capsids together with the inner tegument protein. The chain is Large tegument protein deneddylase from Homo sapiens (Human).